Reading from the N-terminus, the 285-residue chain is Protein pxr1 (285 aa).

Basic residues predominate over residues 1–11 (MGLAAPRKKIK). The interval 1–23 (MGLAAPRKKIKISHDPNNTNWSR) is disordered. One can recognise a G-patch domain in the interval 25–79 (TSGFGHKILSSQGWTPGSFLGARNAAHAEMFTAASASHIKVVLKDDTLGLGARPK). The interval 144 to 263 (TPIVTEEPQG…MGRHVFRGRH (120 aa)) is disordered. Positions 152-163 (QGIHKDKQEDKL) are enriched in basic and acidic residues. Over residues 190 to 208 (KKKKSKSKNHREKKDRKRK) the composition is skewed to basic residues. The segment covering 224 to 234 (RSTEKKSKATR) has biased composition (basic and acidic residues). Residues 254–263 (MGRHVFRGRH) show a composition bias toward basic residues.

It belongs to the PINX1 family.

It localises to the nucleus. It is found in the nucleolus. Functionally, involved in rRNA-processing at A0, A1 and A2 sites and negatively regulates telomerase. This chain is Protein pxr1 (pxr1), found in Aspergillus niger (strain ATCC MYA-4892 / CBS 513.88 / FGSC A1513).